Here is a 252-residue protein sequence, read N- to C-terminus: Pantothenate synthetase (252 aa).

Residue 29-36 participates in ATP binding; sequence MGNLHAGH. His-36 acts as the Proton donor in catalysis. Gln-60 is a binding site for (R)-pantoate. Gln-60 lines the beta-alanine pocket. Position 146 to 149 (146 to 149) interacts with ATP; it reads GEKD. Gln-152 provides a ligand contact to (R)-pantoate. ATP is bound by residues Val-175 and 183-186; that span reads CSSR.

The protein belongs to the pantothenate synthetase family. In terms of assembly, homodimer.

It localises to the cytoplasm. It carries out the reaction (R)-pantoate + beta-alanine + ATP = (R)-pantothenate + AMP + diphosphate + H(+). Its pathway is cofactor biosynthesis; (R)-pantothenate biosynthesis; (R)-pantothenate from (R)-pantoate and beta-alanine: step 1/1. Its function is as follows. Catalyzes the condensation of pantoate with beta-alanine in an ATP-dependent reaction via a pantoyl-adenylate intermediate. The polypeptide is Pantothenate synthetase (Legionella pneumophila (strain Lens)).